The following is a 91-amino-acid chain: Acylphosphatase (91 aa).

One can recognise an Acylphosphatase-like domain in the interval 4 to 91; sequence RAMVTVKGMV…GEFDDFHIAY (88 aa). Catalysis depends on residues Arg19 and Asn37.

The protein belongs to the acylphosphatase family.

It carries out the reaction an acyl phosphate + H2O = a carboxylate + phosphate + H(+). This is Acylphosphatase (acyP) from Geotalea uraniireducens (strain Rf4) (Geobacter uraniireducens).